We begin with the raw amino-acid sequence, 194 residues long: Imidazoleglycerol-phosphate dehydratase (194 aa).

The protein belongs to the imidazoleglycerol-phosphate dehydratase family.

It localises to the cytoplasm. It carries out the reaction D-erythro-1-(imidazol-4-yl)glycerol 3-phosphate = 3-(imidazol-4-yl)-2-oxopropyl phosphate + H2O. It functions in the pathway amino-acid biosynthesis; L-histidine biosynthesis; L-histidine from 5-phospho-alpha-D-ribose 1-diphosphate: step 6/9. This chain is Imidazoleglycerol-phosphate dehydratase, found in Streptococcus sanguinis (strain SK36).